Consider the following 437-residue polypeptide: 2-methylisoborneol synthase (437 aa).

The disordered stretch occupies residues 32 to 125 (AHDSEATVGG…IPGLYHHPVP (94 aa)). The span at 59–73 (PPSPAAPPTDVPAPE) shows a compositional bias: pro residues. 6 residues coordinate Mg(2+): D194, D195, E199, N342, S346, and E350.

Belongs to the terpene synthase family. 2-methylisoborneol synthase subfamily. Mg(2+) is required as a cofactor.

The enzyme catalyses (E)-2-methylgeranyl diphosphate + H2O = 2-methylisoborneol + diphosphate. Functionally, catalyzes the cyclization of 2-methylgeranyl diphosphate (2-MeGPP) to 2-methylisoborneol (2-MIB), which likely involves the intermediacy of 2-methyllinalyl diphosphate. The polypeptide is 2-methylisoborneol synthase (Streptomyces griseus).